Reading from the N-terminus, the 144-residue chain is uncharacterized protein (144 aa).

Residues 24-67 are a coiled coil; sequence KLKELYQRLNQGINVEEVLKETVEDYKEKMEKYILEVLEEIEKY.

This is an uncharacterized protein from Aquifex aeolicus (strain VF5).